Here is a 230-residue protein sequence, read N- to C-terminus: Putative N-acetylmannosamine-6-phosphate 2-epimerase (230 aa).

The protein belongs to the NanE family.

The enzyme catalyses an N-acyl-D-glucosamine 6-phosphate = an N-acyl-D-mannosamine 6-phosphate. It participates in amino-sugar metabolism; N-acetylneuraminate degradation; D-fructose 6-phosphate from N-acetylneuraminate: step 3/5. Converts N-acetylmannosamine-6-phosphate (ManNAc-6-P) to N-acetylglucosamine-6-phosphate (GlcNAc-6-P). The protein is Putative N-acetylmannosamine-6-phosphate 2-epimerase of Malacoplasma penetrans (strain HF-2) (Mycoplasma penetrans).